Here is a 628-residue protein sequence, read N- to C-terminus: (+)-alpha-pinene synthase, chloroplastic (628 aa).

A chloroplast-targeting transit peptide spans 1–48 (MALVSAVPLNSKLCLRRTLFGFSHELKAIHSTVPNLGMCRGGKSIAPS). Residues Asp-379, Asp-383, and Asp-531 each contribute to the Mg(2+) site. The DDXXD motif motif lies at 379–383 (DDIYD). Ser-539 provides a ligand contact to K(+).

It belongs to the terpene synthase family. Tpsd subfamily. Mg(2+) serves as cofactor. Requires Mn(2+) as cofactor. The cofactor is K(+).

The protein resides in the plastid. It is found in the chloroplast. The catalysed reaction is (2E)-geranyl diphosphate = (1R,5R)-alpha-pinene + diphosphate. It functions in the pathway terpene metabolism; oleoresin biosynthesis. Functionally, involved in defensive oleoresin formation in conifers in response to insect attack or other injury. Involved in monoterpene (C10) olefins biosynthesis. Produces mainly (+)-alpha-pinene (97%) with a small amount of (-)-alpha-pinene (3%). This chain is (+)-alpha-pinene synthase, chloroplastic (PT30), found in Pinus taeda (Loblolly pine).